The chain runs to 256 residues: 5-oxoprolinase subunit A 2 (256 aa).

This sequence belongs to the LamB/PxpA family. As to quaternary structure, forms a complex composed of PxpA, PxpB and PxpC.

It catalyses the reaction 5-oxo-L-proline + ATP + 2 H2O = L-glutamate + ADP + phosphate + H(+). Functionally, catalyzes the cleavage of 5-oxoproline to form L-glutamate coupled to the hydrolysis of ATP to ADP and inorganic phosphate. The chain is 5-oxoprolinase subunit A 2 from Bradyrhizobium diazoefficiens (strain JCM 10833 / BCRC 13528 / IAM 13628 / NBRC 14792 / USDA 110).